Here is a 469-residue protein sequence, read N- to C-terminus: ATP sulfurylase 4, chloroplastic (469 aa).

Residues 1–51 (MASSAAAIVSGSPFRSSPLIHNHHASRYAPGSISVVSLPRQVSRRGLSVKS) constitute a chloroplast transit peptide.

It belongs to the sulfate adenylyltransferase family. In terms of assembly, homotetramer. As to expression, expressed in roots and leaves.

The protein localises to the plastid. It is found in the chloroplast stroma. The catalysed reaction is sulfate + ATP + H(+) = adenosine 5'-phosphosulfate + diphosphate. It functions in the pathway sulfur metabolism; hydrogen sulfide biosynthesis; sulfite from sulfate: step 1/3. In terms of biological role, sulfate adenylyltransferase. Catalyzes the first step of the sulfate assimilation pathway. This is ATP sulfurylase 4, chloroplastic (APS4) from Arabidopsis thaliana (Mouse-ear cress).